The following is a 220-amino-acid chain: Fructose-6-phosphate aldolase (220 aa).

Lysine 85 acts as the Schiff-base intermediate with substrate in catalysis.

This sequence belongs to the transaldolase family. Type 3A subfamily. Homodecamer.

It localises to the cytoplasm. It carries out the reaction beta-D-fructose 6-phosphate = dihydroxyacetone + D-glyceraldehyde 3-phosphate. In terms of biological role, catalyzes the reversible formation of fructose 6-phosphate from dihydroxyacetone and D-glyceraldehyde 3-phosphate via an aldolization reaction. This is Fructose-6-phosphate aldolase from Klebsiella pneumoniae subsp. pneumoniae (strain ATCC 700721 / MGH 78578).